The sequence spans 237 residues: Cytochrome c oxidase subunit 2 (237 aa).

Residues 1-30 lie on the Mitochondrial intermembrane side of the membrane; sequence MNLVAPTPWGLFFQDSATPQMEGIEELHNN. A helical transmembrane segment spans residues 31–51; it reads IMFYLTIILFSVTWMMITIIK. The Mitochondrial matrix segment spans residues 52-67; that stretch reads SFVNTKSPISHKYMNH. Residues 68 to 94 form a helical membrane-spanning segment; the sequence is GTLIELIWTITPAVILILIAFPSFKLL. Over 95-237 the chain is Mitochondrial intermembrane; that stretch reads YLMDEVMDPS…SVSLKNFYYD (143 aa). Residues His176, Cys211, Glu213, Cys215, His219, and Met222 each coordinate Cu cation. Residue Glu213 coordinates Mg(2+).

This sequence belongs to the cytochrome c oxidase subunit 2 family. As to quaternary structure, component of the cytochrome c oxidase (complex IV, CIV), a multisubunit enzyme composed of a catalytic core of 3 subunits and several supernumerary subunits. The complex exists as a monomer or a dimer and forms supercomplexes (SCs) in the inner mitochondrial membrane with ubiquinol-cytochrome c oxidoreductase (cytochrome b-c1 complex, complex III, CIII). The cofactor is Cu cation.

It is found in the mitochondrion inner membrane. It carries out the reaction 4 Fe(II)-[cytochrome c] + O2 + 8 H(+)(in) = 4 Fe(III)-[cytochrome c] + 2 H2O + 4 H(+)(out). Its function is as follows. Component of the cytochrome c oxidase, the last enzyme in the mitochondrial electron transport chain which drives oxidative phosphorylation. The respiratory chain contains 3 multisubunit complexes succinate dehydrogenase (complex II, CII), ubiquinol-cytochrome c oxidoreductase (cytochrome b-c1 complex, complex III, CIII) and cytochrome c oxidase (complex IV, CIV), that cooperate to transfer electrons derived from NADH and succinate to molecular oxygen, creating an electrochemical gradient over the inner membrane that drives transmembrane transport and the ATP synthase. Cytochrome c oxidase is the component of the respiratory chain that catalyzes the reduction of oxygen to water. Electrons originating from reduced cytochrome c in the intermembrane space (IMS) are transferred via the dinuclear copper A center (CU(A)) of subunit 2 and heme A of subunit 1 to the active site in subunit 1, a binuclear center (BNC) formed by heme A3 and copper B (CU(B)). The BNC reduces molecular oxygen to 2 water molecules using 4 electrons from cytochrome c in the IMS and 4 protons from the mitochondrial matrix. The sequence is that of Cytochrome c oxidase subunit 2 (COX2) from Trichophyton rubrum (Athlete's foot fungus).